Reading from the N-terminus, the 1370-residue chain is DNA-directed RNA polymerase subunit beta (1370 aa).

Belongs to the RNA polymerase beta chain family. As to quaternary structure, the RNAP catalytic core consists of 2 alpha, 1 beta, 1 beta' and 1 omega subunit. When a sigma factor is associated with the core the holoenzyme is formed, which can initiate transcription.

It catalyses the reaction RNA(n) + a ribonucleoside 5'-triphosphate = RNA(n+1) + diphosphate. In terms of biological role, DNA-dependent RNA polymerase catalyzes the transcription of DNA into RNA using the four ribonucleoside triphosphates as substrates. The sequence is that of DNA-directed RNA polymerase subunit beta from Bordetella bronchiseptica (strain ATCC BAA-588 / NCTC 13252 / RB50) (Alcaligenes bronchisepticus).